The sequence spans 635 residues: Glycosyltransferase-like protein gnt13 (635 aa).

The Cytoplasmic segment spans residues methionine 1–asparagine 18. The helical; Signal-anchor for type II membrane protein transmembrane segment at phenylalanine 19–leucine 38 threads the bilayer. The Extracellular portion of the chain corresponds to methionine 39–tryptophan 635. N-linked (GlcNAc...) asparagine glycosylation is found at asparagine 41 and asparagine 179. 2 disordered regions span residues asparagine 300 to aspartate 358 and asparagine 389 to proline 458. The span at asparagine 389–asparagine 456 shows a compositional bias: low complexity. Residues asparagine 393 and asparagine 535 are each glycosylated (N-linked (GlcNAc...) asparagine).

Belongs to the glycosyltransferase 8 family. Highly divergent.

The protein resides in the membrane. In Dictyostelium discoideum (Social amoeba), this protein is Glycosyltransferase-like protein gnt13 (gnt13).